Here is a 300-residue protein sequence, read N- to C-terminus: GTPase Era (300 aa).

One can recognise an Era-type G domain in the interval 8–176 (RCGYVAIVGR…ESLIASHLPE (169 aa)). The tract at residues 16-23 (GRPNVGKS) is G1. 16-23 (GRPNVGKS) is a binding site for GTP. Residues 42–46 (QTTRH) form a G2 region. The interval 63–66 (DTPG) is G3. GTP-binding positions include 63 to 67 (DTPGM) and 125 to 128 (NKTD). The interval 125 to 128 (NKTD) is G4. The G5 stretch occupies residues 155–157 (ISA). The 85-residue stretch at 199 to 283 (VREKIMRQLG…MLNLWVKVKG (85 aa)) folds into the KH type-2 domain.

This sequence belongs to the TRAFAC class TrmE-Era-EngA-EngB-Septin-like GTPase superfamily. Era GTPase family. In terms of assembly, monomer.

Its subcellular location is the cytoplasm. The protein resides in the cell inner membrane. In terms of biological role, an essential GTPase that binds both GDP and GTP, with rapid nucleotide exchange. Plays a role in 16S rRNA processing and 30S ribosomal subunit biogenesis and possibly also in cell cycle regulation and energy metabolism. This chain is GTPase Era, found in Pseudomonas syringae pv. tomato (strain ATCC BAA-871 / DC3000).